The sequence spans 217 residues: Probable transaldolase (217 aa).

Residue Lys-85 is the Schiff-base intermediate with substrate of the active site.

This sequence belongs to the transaldolase family. Type 3B subfamily.

Its subcellular location is the cytoplasm. The enzyme catalyses D-sedoheptulose 7-phosphate + D-glyceraldehyde 3-phosphate = D-erythrose 4-phosphate + beta-D-fructose 6-phosphate. It participates in carbohydrate degradation; pentose phosphate pathway; D-glyceraldehyde 3-phosphate and beta-D-fructose 6-phosphate from D-ribose 5-phosphate and D-xylulose 5-phosphate (non-oxidative stage): step 2/3. In terms of biological role, transaldolase is important for the balance of metabolites in the pentose-phosphate pathway. The protein is Probable transaldolase of Lachnoclostridium phytofermentans (strain ATCC 700394 / DSM 18823 / ISDg) (Clostridium phytofermentans).